Here is an 82-residue protein sequence, read N- to C-terminus: Sodium channel neurotoxin MeuNaTxalpha-3 (82 aa).

Positions 1–8 are cleaved as a signal peptide; the sequence is LVMAGVES. Positions 10-80 constitute an LCN-type CS-alpha/beta domain; that stretch reads RDGHIARNNN…VPIKVPGDCH (71 aa). 4 disulfides stabilise this stretch: cysteine 20–cysteine 79, cysteine 24–cysteine 52, cysteine 38–cysteine 62, and cysteine 42–cysteine 64.

As to expression, expressed by the venom gland.

Its subcellular location is the secreted. Its function is as follows. Alpha toxins bind voltage-independently at site-3 of sodium channels (Nav) and inhibit the inactivation of the activated channels, thereby blocking neuronal transmission. The chain is Sodium channel neurotoxin MeuNaTxalpha-3 from Mesobuthus eupeus (Lesser Asian scorpion).